The sequence spans 35 residues: Photosystem II reaction center protein T (35 aa).

The chain crosses the membrane as a helical span at residues 3–23 (ALVYTFLLVSTLGIIFFAIFF).

Belongs to the PsbT family. As to quaternary structure, PSII is composed of 1 copy each of membrane proteins PsbA, PsbB, PsbC, PsbD, PsbE, PsbF, PsbH, PsbI, PsbJ, PsbK, PsbL, PsbM, PsbT, PsbY, PsbZ, Psb30/Ycf12, at least 3 peripheral proteins of the oxygen-evolving complex and a large number of cofactors. It forms dimeric complexes.

The protein resides in the plastid. It localises to the chloroplast thylakoid membrane. In terms of biological role, found at the monomer-monomer interface of the photosystem II (PS II) dimer, plays a role in assembly and dimerization of PSII. PSII is a light-driven water plastoquinone oxidoreductase, using light energy to abstract electrons from H(2)O, generating a proton gradient subsequently used for ATP formation. The protein is Photosystem II reaction center protein T of Ceratophyllum demersum (Rigid hornwort).